The primary structure comprises 248 residues: Short-chain dehydrogenase/reductase iacG (248 aa).

Residues Ile-14, Asn-35, Lys-41, Asp-58, Arg-120, and Val-187 each contribute to the NADP(+) site.

It belongs to the short-chain dehydrogenases/reductases (SDR) family.

It participates in secondary metabolite biosynthesis. Short-chain dehydrogenase/reductase; part of the gene cluster that mediates the biosynthesis of iso-A82775C, a enylepoxycyclohexane and biosynthetic precursor of the chloropestolide anticancer natural products. Within the cluster, the prenyltransferase iacE prenylates siccayne to generate pestalodiol E, using dimethylallyl diphosphate (DMAPP) as cosubstrate. The probable oxidoreductase iacF is then involved in the epoxidation of pestalodiol F to pestalodiol F, which is further converted to pestalofone A by the short-chain dehydrogenase/reductase iacG. Iso-A82775C is subsequently generated from pestalofone A by the short-chain dehydrogenase/reductase iacC. Iso-A82775C is further condensed with maldoxin via a Diels-Alder reaction to produce the anticancer natural products chloropestolides A to E. The protein is Short-chain dehydrogenase/reductase iacG of Pestalotiopsis fici (strain W106-1 / CGMCC3.15140).